The following is a 36-amino-acid chain: Defensin-like turtle egg white protein TEWP (36 aa).

Q1 is subject to Pyrrolidone carboxylic acid. 3 disulfides stabilise this stretch: C4/C30, C8/C29, and C12/C24.

This sequence belongs to the beta-defensin family. As to quaternary structure, monomer. In terms of tissue distribution, detected in egg white (at protein level).

It localises to the secreted. Its function is as follows. Antibacterial and antiviral peptide. Has strong inhibitory activity towards E.coli and S.typhimurium. Has significant antiviral activity against Chandipura virus. In Caretta caretta (Loggerhead sea turtle), this protein is Defensin-like turtle egg white protein TEWP.